The following is a 624-amino-acid chain: Phosphomethylpyrimidine synthase (624 aa).

Residues 40–61 form a disordered region; sequence VPMRKISQSDTPTNTGREKNPP. The segment covering 45–54 has biased composition (polar residues); the sequence is ISQSDTPTNT. Residues Asn229, Met258, Tyr287, His323, 343-345, 384-387, and Glu423 each bind substrate; these read SRG and DGLR. Residue His427 participates in Zn(2+) binding. Tyr450 provides a ligand contact to substrate. His491 is a binding site for Zn(2+). [4Fe-4S] cluster contacts are provided by Cys571, Cys574, and Cys579.

It belongs to the ThiC family. In terms of assembly, homodimer. The cofactor is [4Fe-4S] cluster.

The enzyme catalyses 5-amino-1-(5-phospho-beta-D-ribosyl)imidazole + S-adenosyl-L-methionine = 4-amino-2-methyl-5-(phosphooxymethyl)pyrimidine + CO + 5'-deoxyadenosine + formate + L-methionine + 3 H(+). Its pathway is cofactor biosynthesis; thiamine diphosphate biosynthesis. Its function is as follows. Catalyzes the synthesis of the hydroxymethylpyrimidine phosphate (HMP-P) moiety of thiamine from aminoimidazole ribotide (AIR) in a radical S-adenosyl-L-methionine (SAM)-dependent reaction. The chain is Phosphomethylpyrimidine synthase from Methylococcus capsulatus (strain ATCC 33009 / NCIMB 11132 / Bath).